Consider the following 719-residue polypeptide: Glycine--tRNA ligase beta subunit (719 aa).

The tract at residues 65–84 is disordered; it reads PDREEEIKGPPAKAAFKDGK.

The protein belongs to the class-II aminoacyl-tRNA synthetase family. In terms of assembly, tetramer of two alpha and two beta subunits.

Its subcellular location is the cytoplasm. The catalysed reaction is tRNA(Gly) + glycine + ATP = glycyl-tRNA(Gly) + AMP + diphosphate. In Trichodesmium erythraeum (strain IMS101), this protein is Glycine--tRNA ligase beta subunit.